The chain runs to 217 residues: 3-demethoxyubiquinol 3-hydroxylase (217 aa).

6 residues coordinate Fe cation: E66, E96, H99, E148, E180, and H183.

Belongs to the COQ7 family. Requires Fe cation as cofactor.

It localises to the cell membrane. The enzyme catalyses a 5-methoxy-2-methyl-3-(all-trans-polyprenyl)benzene-1,4-diol + AH2 + O2 = a 3-demethylubiquinol + A + H2O. The protein operates within cofactor biosynthesis; ubiquinone biosynthesis. Catalyzes the hydroxylation of 2-nonaprenyl-3-methyl-6-methoxy-1,4-benzoquinol during ubiquinone biosynthesis. The protein is 3-demethoxyubiquinol 3-hydroxylase of Xanthomonas euvesicatoria pv. vesicatoria (strain 85-10) (Xanthomonas campestris pv. vesicatoria).